A 296-amino-acid chain; its full sequence is Probable AP endonuclease (296 aa).

The cysteines at positions 16 and 20 are disulfide-linked. Histidine 78, histidine 115, glutamate 142, histidine 182, histidine 218, aspartate 231, histidine 233, and glutamate 271 together coordinate Zn(2+).

This sequence belongs to the AP endonuclease 2 family. It depends on Zn(2+) as a cofactor.

The protein resides in the host nucleus. It is found in the host cytoplasm. It localises to the virion. In terms of biological role, endonuclease that plays a role in DNA repair. Cleaves phosphodiester bonds on the 5' side of apurinic or apyrimidinic sites (AP sites). In addition to endonuclease activity, the ASFV enzyme has a proofreading 3'-5' exonuclease activity that is considerably more efficient in the elimination of a mismatch than in that of a correctly paired base. Displays 3'-phosphatase and 3'-repair diesterase activities. The single nucleotide gaps generated by the AP endonuclease are filled by the viral AP endonuclease and DNA ligase. The polypeptide is Probable AP endonuclease (Ornithodoros (relapsing fever ticks)).